We begin with the raw amino-acid sequence, 146 residues long: Hemoglobin subunit beta (146 aa).

Valine 1 is subject to N-acetylvaline. The Globin domain maps to 2–146 (HLTAEEKSAV…VANALAHKYH (145 aa)). Threonine 12 carries the post-translational modification Phosphothreonine. Serine 44 is modified (phosphoserine). Position 59 is an N6-acetyllysine (lysine 59). Heme b is bound at residue histidine 63. Lysine 82 carries the N6-acetyllysine modification. Histidine 92 provides a ligand contact to heme b. Residue cysteine 93 is modified to S-nitrosocysteine. An N6-acetyllysine modification is found at lysine 144.

It belongs to the globin family. In terms of assembly, heterotetramer of two alpha chains and two beta chains. Red blood cells.

Involved in oxygen transport from the lung to the various peripheral tissues. The polypeptide is Hemoglobin subunit beta (HBB) (Meles meles (Eurasian badger)).